The following is a 239-amino-acid chain: Sensory rhodopsin-1 (239 aa).

At 1–3 the chain is on the extracellular side; it reads MDA. A helical transmembrane segment spans residues 4-25; that stretch reads VATAYLGGAVALIVGVAFVWLL. Residues 26-34 lie on the Cytoplasmic side of the membrane; that stretch reads YRSLDGSPH. Residues 35-56 form a helical membrane-spanning segment; the sequence is QSALAPLAIIPVFAGLSYVGMA. Topologically, residues 57–70 are extracellular; that stretch reads YDIGTVIVNGNQIV. A helical membrane pass occupies residues 71–92; the sequence is GLRYIDWLVTTPILVGYVGYAA. At 93-95 the chain is on the cytoplasmic side; sequence GAS. The chain crosses the membrane as a helical span at residues 96–118; sequence RRSIIGVMVADALMIAVGAGAVV. Residues 119–122 lie on the Extracellular side of the membrane; sequence TDGT. Residues 123 to 150 form a helical membrane-spanning segment; the sequence is LKWALFGVSSIFHLSLFAYLYVIFPRVV. At 151–153 the chain is on the cytoplasmic side; the sequence is PDV. Residues 154-181 traverse the membrane as a helical segment; that stretch reads PEQIGLFNLLKNHIGLLWLAYPLVWLFG. The Extracellular portion of the chain corresponds to 182 to 189; it reads PAGIGEAT. A helical membrane pass occupies residues 190-222; the sequence is AAGVALTYVFLDVLAKVPYVYFFYARRRVFMHS. Lys-205 is subject to N6-(retinylidene)lysine. The Cytoplasmic segment spans residues 223–239; sequence ESPPAPEQATVEATAAD.

Belongs to the archaeal/bacterial/fungal opsin family. In terms of assembly, interacts with HTR-I.

The protein localises to the cell membrane. Functionally, involved in the control of phototaxis. Mediates both photoattractant (in the orange light) and photophobic (in the near UV light) responses. The signal is then transmitted to the sensory rhodopsin I transducer (HTR-I). The chain is Sensory rhodopsin-1 (sopI) from Halobacterium salinarum (strain ATCC 29341 / DSM 671 / R1).